The sequence spans 267 residues: Transcription factor HES-1 (267 aa).

The tract at residues 1 to 45 (MPADLMEKNSSSPVAATPASMSNTPDKPKTASEHRKSSKPIMEKR) is disordered. Residues 8 to 25 (KNSSSPVAATPASMSNTP) show a composition bias toward polar residues. A compositionally biased stretch (basic and acidic residues) spans 26 to 35 (DKPKTASEHR). The region spanning 34 to 91 (HRKSSKPIMEKRRRARINESLGQLKTLILDALKKDSSRHSKLEKADILEMTVKHLRNL) is the bHLH domain. The 34-residue stretch at 110–143 (YRAGFSECMNEVTRFLSTCEGVNTDVRTRLLGHL) folds into the Orange domain. The WRPW motif signature appears at 264-267 (WRPW).

In terms of assembly, transcription repression requires formation of a complex with a corepressor protein of the Groucho/TLE family. Interacts with the bHLH protein hes2, and binds DNA in the form of a heterodimer with the bHLH protein hey1/hrt1. Interacts with the bHLH protein hes6; this interaction may inhibit the transcriptional repressor activity.

It is found in the nucleus. Transcriptional repressor of a subset of early mesodermal genes including myod1 and t/bra. Binds DNA on N-box motifs: 5'-CACNAG-3'. Acts as a negative regulator of myogenesis, mediating Notch signaling to repress expression of myod1. The polypeptide is Transcription factor HES-1 (Xenopus tropicalis (Western clawed frog)).